A 382-amino-acid polypeptide reads, in one-letter code: MAP kinase-activated protein kinase 3 (382 aa).

The residue at position 1 (Met1) is an N-acetylmethionine. The interval 1 to 34 is disordered; that stretch reads MDGETAEEQGGPVPPPVAPGGPGLGGAPGGRREP. Residues 20–29 show a composition bias toward gly residues; the sequence is GGPGLGGAPG. Residues 44 to 304 form the Protein kinase domain; sequence QLSKQVLGLG…ITQFMNHPWI (261 aa). ATP contacts are provided by residues 50–58 and Lys73; that span reads LGLGVNGKV. Catalysis depends on Asp166, which acts as the Proton acceptor. Thr201 is modified (phosphothreonine; by MAPK14). Ser251 is subject to Phosphoserine; by MAPK14. Residue Ser307 is modified to Phosphoserine; by autocatalysis. The segment at 307–343 is autoinhibitory helix; that stretch reads SMVVPQTPLHTARVLQEDKDHWDEVKEEMTSALATMR. Thr313 bears the Phosphothreonine; by MAPK14 mark. Residues 335–344 carry the Nuclear export signal (NES) motif; sequence MTSALATMRV. Residues 345–369 are p38 MAPK-binding site; it reads DYDQVKIKDLKTSNNRLLNKRRKKQ. 2 short sequence motifs (bipartite nuclear localization signal) span residues 350–353 and 364–368; these read KIKD and KRRKK. Residues 357 to 382 are disordered; that stretch reads SNNRLLNKRRKKQAGSSSASQGCNNQ. Over residues 370–382 the composition is skewed to polar residues; it reads AGSSSASQGCNNQ.

It belongs to the protein kinase superfamily. CAMK Ser/Thr protein kinase family. Heterodimer with p38-alpha/MAPK14. The heterodimer with p38-alpha/MAPK14 forms a stable complex: molecules are positioned 'face to face' so that the ATP-binding sites of both kinases are at the heterodimer interface. Interacts with TCF3 and with polycomb proteins, such as PCH2 and BMI1/PCGF4. Phosphorylated and activated by MAPK1/ERK2 and MAPK3/ERK1. Phosphorylated and activated by MAP kinase p38-alpha/MAPK14 at Thr-201, Ser-251 and Thr-313. In terms of tissue distribution, widely expressed, with a higher expression level observed in heart and skeletal muscle. No expression in brain. Expressed in the retinal pigment epithelium.

The protein resides in the nucleus. It localises to the cytoplasm. It carries out the reaction L-seryl-[protein] + ATP = O-phospho-L-seryl-[protein] + ADP + H(+). The catalysed reaction is L-threonyl-[protein] + ATP = O-phospho-L-threonyl-[protein] + ADP + H(+). With respect to regulation, activated following phosphorylation by p38-alpha/MAPK14 following various stresses. Inhibited by ligand 5B (2'-[2-(1,3-benzodioxol-5-yl)pyrimidin-4-yl]-5',6'-dihydrospiro[piperidine-4,7'-pyrrolo[3,2-c]pyridin]- 4'(1'h)-one) and ligand P4O (2-[2-(2-fluorophenyl)pyridin-4-yl]-1,5,6,7-tetrahydro- 4h-pyrrolo[3,2-c]pyridin-4-one), 2 ATP-competitive inhibitors. In terms of biological role, stress-activated serine/threonine-protein kinase involved in cytokines production, endocytosis, cell migration, chromatin remodeling and transcriptional regulation. Following stress, it is phosphorylated and activated by MAP kinase p38-alpha/MAPK14, leading to phosphorylation of substrates. Phosphorylates serine in the peptide sequence, Hyd-X-R-X(2)-S, where Hyd is a large hydrophobic residue. MAPKAPK2 and MAPKAPK3, share the same function and substrate specificity, but MAPKAPK3 kinase activity and level in protein expression are lower compared to MAPKAPK2. Phosphorylates HSP27/HSPB1, KRT18, KRT20, RCSD1, RPS6KA3, TAB3 and TTP/ZFP36. Mediates phosphorylation of HSP27/HSPB1 in response to stress, leading to dissociate HSP27/HSPB1 from large small heat-shock protein (sHsps) oligomers and impair their chaperone activities and ability to protect against oxidative stress effectively. Involved in inflammatory response by regulating tumor necrosis factor (TNF) and IL6 production post-transcriptionally: acts by phosphorylating AU-rich elements (AREs)-binding proteins, such as TTP/ZFP36, leading to regulate the stability and translation of TNF and IL6 mRNAs. Phosphorylation of TTP/ZFP36, a major post-transcriptional regulator of TNF, promotes its binding to 14-3-3 proteins and reduces its ARE mRNA affinity leading to inhibition of dependent degradation of ARE-containing transcript. Involved in toll-like receptor signaling pathway (TLR) in dendritic cells: required for acute TLR-induced macropinocytosis by phosphorylating and activating RPS6KA3. Also acts as a modulator of Polycomb-mediated repression. The protein is MAP kinase-activated protein kinase 3 (MAPKAPK3) of Homo sapiens (Human).